We begin with the raw amino-acid sequence, 395 residues long: Succinyl-diaminopimelate desuccinylase (395 aa).

Position 74 (His-74) interacts with Zn(2+). Residue Asp-76 is part of the active site. Asp-107 serves as a coordination point for Zn(2+). The active-site Proton acceptor is the Glu-141. Positions 142, 170, and 368 each coordinate Zn(2+).

The protein belongs to the peptidase M20A family. DapE subfamily. As to quaternary structure, homodimer. Requires Zn(2+) as cofactor. It depends on Co(2+) as a cofactor.

It carries out the reaction N-succinyl-(2S,6S)-2,6-diaminopimelate + H2O = (2S,6S)-2,6-diaminopimelate + succinate. It functions in the pathway amino-acid biosynthesis; L-lysine biosynthesis via DAP pathway; LL-2,6-diaminopimelate from (S)-tetrahydrodipicolinate (succinylase route): step 3/3. In terms of biological role, catalyzes the hydrolysis of N-succinyl-L,L-diaminopimelic acid (SDAP), forming succinate and LL-2,6-diaminopimelate (DAP), an intermediate involved in the bacterial biosynthesis of lysine and meso-diaminopimelic acid, an essential component of bacterial cell walls. This Brucella canis (strain ATCC 23365 / NCTC 10854 / RM-666) protein is Succinyl-diaminopimelate desuccinylase.